We begin with the raw amino-acid sequence, 112 residues long: Large ribosomal subunit protein bL17 (112 aa).

It belongs to the bacterial ribosomal protein bL17 family. As to quaternary structure, part of the 50S ribosomal subunit. Contacts protein L32.

This is Large ribosomal subunit protein bL17 from Desulforamulus reducens (strain ATCC BAA-1160 / DSM 100696 / MI-1) (Desulfotomaculum reducens).